Here is a 246-residue protein sequence, read N- to C-terminus: Probable transcriptional regulatory protein PM0980 (246 aa).

It belongs to the TACO1 family.

Its subcellular location is the cytoplasm. The protein is Probable transcriptional regulatory protein PM0980 of Pasteurella multocida (strain Pm70).